The primary structure comprises 348 residues: Mannonate dehydratase (348 aa).

This sequence belongs to the mannonate dehydratase family. Requires Fe(2+) as cofactor. The cofactor is Mn(2+).

The enzyme catalyses D-mannonate = 2-dehydro-3-deoxy-D-gluconate + H2O. It participates in carbohydrate metabolism; pentose and glucuronate interconversion. Its function is as follows. Catalyzes the dehydration of D-mannonate. This is Mannonate dehydratase from Streptococcus agalactiae serotype III (strain NEM316).